The following is a 194-amino-acid chain: Peptidyl-tRNA hydrolase (194 aa).

Tyrosine 16 serves as a coordination point for tRNA. Histidine 21 serves as the catalytic Proton acceptor. Residues phenylalanine 67, asparagine 69, and asparagine 115 each coordinate tRNA.

The protein belongs to the PTH family. In terms of assembly, monomer.

The protein resides in the cytoplasm. The enzyme catalyses an N-acyl-L-alpha-aminoacyl-tRNA + H2O = an N-acyl-L-amino acid + a tRNA + H(+). Hydrolyzes ribosome-free peptidyl-tRNAs (with 1 or more amino acids incorporated), which drop off the ribosome during protein synthesis, or as a result of ribosome stalling. Functionally, catalyzes the release of premature peptidyl moieties from peptidyl-tRNA molecules trapped in stalled 50S ribosomal subunits, and thus maintains levels of free tRNAs and 50S ribosomes. The polypeptide is Peptidyl-tRNA hydrolase (Salmonella paratyphi B (strain ATCC BAA-1250 / SPB7)).